The primary structure comprises 235 residues: MNKTQENALKALQQGFVASCQPVDDGPMDSPMIVAAMAQAAVAGGVAGIRIEGIENVKAVRPHVNVPIIGIIKRDLEHSDVRITPFIEDVYALKAAGADVIAIDATHRVRPTSVEDLIDAIHSVGCLAMADCSTYDEGMYCQARGVQIIGSTLSGYTGGPVPAEPDFDLITRLKQAGCRVMAEGRFNTPELAGKAIEAGAFCVTVGSAITRVEHICSWFQAEVEHAHQAQSEAVA.

The protein belongs to the NanE family.

The enzyme catalyses an N-acyl-D-glucosamine 6-phosphate = an N-acyl-D-mannosamine 6-phosphate. It functions in the pathway amino-sugar metabolism; N-acetylneuraminate degradation; D-fructose 6-phosphate from N-acetylneuraminate: step 3/5. In terms of biological role, converts N-acetylmannosamine-6-phosphate (ManNAc-6-P) to N-acetylglucosamine-6-phosphate (GlcNAc-6-P). The protein is Putative N-acetylmannosamine-6-phosphate 2-epimerase of Photobacterium profundum (strain SS9).